The following is a 500-amino-acid chain: MNNFPWLTAILLLPISAGSSILFIPQRGNKAVRWYTICICLLELLLMTYVFYYNFQLDDPLIQLEEDCNWINLFDFHWRLGIDGLSIGPILLTGFITTLATSAAWPVTRNSRLFHFLMLAMYSGQIGSFSSRDLLLFFIMWELELIPVYLLLSMWGGKKRLYSATKFILYTAGGSIFLLIGVLGMGLYSSNQPMLNFETSANQSYPVGLEILFYFGFLIAYAAKPPIIPLHTWLPDTHGEAHYSTCMLLAGILLKMGAYGLVRINMELLPHAHSLFSPWLVIVGTLQIIYAASTSLGQRNLKKRIAYSSVSHMGSTIIGIGSMTDTALNGAILQIISHGFIGAALFFLAGTSYDRIRFLYLDEMGGIAIPMPKIFTMFSIFSMASLASPGMSGFVAEFLVFLGIITSPKYLFIPKILITVVMAIGMILTPIYLLSMSRQMFYGYKLFNVPNSYFVDSGPREIFILISILLPVMGIGIYPDFVLSLSVDKVEAILANYFNG.

12 consecutive transmembrane segments (helical) span residues 4–24 (FPWLTAILLLPISAGSSILFI), 37–57 (ICICLLELLLMTYVFYYNFQL), 80–100 (LGIDGLSIGPILLTGFITTLA), 134–154 (LLLFFIMWELELIPVYLLLSM), 167–187 (FILYTAGGSIFLLIGVLGMGL), 208–228 (GLEILFYFGFLIAYAAKPPII), 242–262 (HYSTCMLLAGILLKMGAYGLV), 272–292 (AHSLFSPWLVIVGTLQIIYAA), 330–350 (GAILQIISHGFIGAALFFLAG), 386–406 (LASPGMSGFVAEFLVFLGIIT), 416–436 (ILITVVMAIGMILTPIYLLSM), and 462–482 (IFILISILLPVMGIGIYPDFV).

Belongs to the complex I subunit 4 family.

It localises to the plastid. It is found in the chloroplast thylakoid membrane. The catalysed reaction is a plastoquinone + NADH + (n+1) H(+)(in) = a plastoquinol + NAD(+) + n H(+)(out). It catalyses the reaction a plastoquinone + NADPH + (n+1) H(+)(in) = a plastoquinol + NADP(+) + n H(+)(out). The sequence is that of NAD(P)H-quinone oxidoreductase chain 4, chloroplastic from Amborella trichopoda.